Here is a 436-residue protein sequence, read N- to C-terminus: Trigger factor (436 aa).

One can recognise a PPIase FKBP-type domain in the interval 161 to 246 (EDQLNIDFVG…VNSVSEPKLP (86 aa)).

The protein belongs to the FKBP-type PPIase family. Tig subfamily.

The protein localises to the cytoplasm. It carries out the reaction [protein]-peptidylproline (omega=180) = [protein]-peptidylproline (omega=0). In terms of biological role, involved in protein export. Acts as a chaperone by maintaining the newly synthesized protein in an open conformation. Functions as a peptidyl-prolyl cis-trans isomerase. In Pseudomonas fluorescens (strain SBW25), this protein is Trigger factor.